Consider the following 313-residue polypeptide: E3 ubiquitin-protein ligase siah2 (313 aa).

Residues 1–49 (MSRPSSAGPCASKPCGKQKQPPPPPPHAPSLPATISGGPGASAPPAPTA) form a disordered region. Residues 20-29 (QPPPPPPHAP) are compositionally biased toward pro residues. Residues 69–104 (CPVCFDYVLPPILQCQAGHLVCNQCRQKLSCCPTCR) form an RING-type zinc finger. An SBD region spans residues 119 to 311 (VASAVLFPCK…LGINVTISTC (193 aa)). The SIAH-type zinc-finger motif lies at 122–182 (AVLFPCKYAS…VMQHLTHSHK (61 aa)). Zn(2+) is bound by residues C127, C134, H146, C150, C157, C164, H176, and H181.

The protein belongs to the SINA (Seven in absentia) family. In terms of assembly, homodimer. Widely expressed in early embryos until stage 40. It is then expressed in brain, spinal cord and in the developing and mature eye.

The protein resides in the cytoplasm. It catalyses the reaction S-ubiquitinyl-[E2 ubiquitin-conjugating enzyme]-L-cysteine + [acceptor protein]-L-lysine = [E2 ubiquitin-conjugating enzyme]-L-cysteine + N(6)-ubiquitinyl-[acceptor protein]-L-lysine.. The protein operates within protein modification; protein ubiquitination. Its function is as follows. E3 ubiquitin-protein ligase that mediates ubiquitination and subsequent proteasomal degradation of target proteins. E3 ubiquitin ligases accept ubiquitin from an E2 ubiquitin-conjugating enzyme in the form of a thioester and then directly transfers the ubiquitin to targeted substrates. Involved in eye morphogenesis, probably triggers the ubiquitin-mediated degradation of different substrates. May play a role in the regulation of the cellular clock function. The sequence is that of E3 ubiquitin-protein ligase siah2 (siah2) from Xenopus laevis (African clawed frog).